We begin with the raw amino-acid sequence, 275 residues long: 2,3,4,5-tetrahydropyridine-2,6-dicarboxylate N-succinyltransferase (275 aa).

Substrate is bound by residues arginine 104 and aspartate 141.

This sequence belongs to the transferase hexapeptide repeat family. As to quaternary structure, homotrimer.

The protein resides in the cytoplasm. The enzyme catalyses (S)-2,3,4,5-tetrahydrodipicolinate + succinyl-CoA + H2O = (S)-2-succinylamino-6-oxoheptanedioate + CoA. It participates in amino-acid biosynthesis; L-lysine biosynthesis via DAP pathway; LL-2,6-diaminopimelate from (S)-tetrahydrodipicolinate (succinylase route): step 1/3. The protein is 2,3,4,5-tetrahydropyridine-2,6-dicarboxylate N-succinyltransferase of Tolumonas auensis (strain DSM 9187 / NBRC 110442 / TA 4).